We begin with the raw amino-acid sequence, 89 residues long: Small ribosomal subunit protein bS18 (89 aa).

Belongs to the bacterial ribosomal protein bS18 family. As to quaternary structure, part of the 30S ribosomal subunit. Forms a tight heterodimer with protein bS6.

Its function is as follows. Binds as a heterodimer with protein bS6 to the central domain of the 16S rRNA, where it helps stabilize the platform of the 30S subunit. In Bdellovibrio bacteriovorus (strain ATCC 15356 / DSM 50701 / NCIMB 9529 / HD100), this protein is Small ribosomal subunit protein bS18.